We begin with the raw amino-acid sequence, 226 residues long: Large ribosomal subunit protein uL3 (226 aa).

Residues 135–158 are disordered; it reads MSSQRASHGNSRSHNVPGSIGMAQ. Residues 137 to 150 show a composition bias toward polar residues; that stretch reads SQRASHGNSRSHNV. At Gln-158 the chain carries N5-methylglutamine.

It belongs to the universal ribosomal protein uL3 family. As to quaternary structure, part of the 50S ribosomal subunit. Forms a cluster with proteins L14 and L19. In terms of processing, methylated by PrmB.

Functionally, one of the primary rRNA binding proteins, it binds directly near the 3'-end of the 23S rRNA, where it nucleates assembly of the 50S subunit. In Polaromonas naphthalenivorans (strain CJ2), this protein is Large ribosomal subunit protein uL3.